The primary structure comprises 183 residues: Peptide deformylase (183 aa).

The Fe cation site is built by C110 and H153. E154 is a catalytic residue. Residue H157 coordinates Fe cation.

It belongs to the polypeptide deformylase family. It depends on Fe(2+) as a cofactor.

The catalysed reaction is N-terminal N-formyl-L-methionyl-[peptide] + H2O = N-terminal L-methionyl-[peptide] + formate. Removes the formyl group from the N-terminal Met of newly synthesized proteins. Requires at least a dipeptide for an efficient rate of reaction. N-terminal L-methionine is a prerequisite for activity but the enzyme has broad specificity at other positions. This Listeria monocytogenes serotype 4a (strain HCC23) protein is Peptide deformylase.